Consider the following 182-residue polypeptide: UPF0397 protein SPH_0594 (182 aa).

Transmembrane regions (helical) follow at residues 10–30 (VVAV…NIPT), 46–66 (LLSI…GHAI), 73–93 (YGLW…VGLF), 109–129 (ILIF…VLAP), and 148–168 (IVAG…LLLA).

Belongs to the UPF0397 family.

The protein localises to the cell membrane. The sequence is that of UPF0397 protein SPH_0594 from Streptococcus pneumoniae (strain Hungary19A-6).